Consider the following 164-residue polypeptide: Thiol peroxidase (164 aa).

In terms of domain architecture, Thioredoxin spans 16–162 (LQVGEIAHDF…YDAAIEAVKV (147 aa)). Cysteine 58 functions as the Cysteine sulfenic acid (-SOH) intermediate in the catalytic mechanism. Residues cysteine 58 and cysteine 92 are joined by a disulfide bond.

This sequence belongs to the peroxiredoxin family. Tpx subfamily. As to quaternary structure, homodimer.

The enzyme catalyses a hydroperoxide + [thioredoxin]-dithiol = an alcohol + [thioredoxin]-disulfide + H2O. Functionally, thiol-specific peroxidase that catalyzes the reduction of hydrogen peroxide and organic hydroperoxides to water and alcohols, respectively. Plays a role in cell protection against oxidative stress by detoxifying peroxides. This chain is Thiol peroxidase, found in Streptococcus parasanguinis.